Here is a 451-residue protein sequence, read N- to C-terminus: UDP-N-acetylmuramate--L-alanine ligase (451 aa).

An ATP-binding site is contributed by 110–116 (GTHGKTT).

Belongs to the MurCDEF family.

The protein localises to the cytoplasm. The catalysed reaction is UDP-N-acetyl-alpha-D-muramate + L-alanine + ATP = UDP-N-acetyl-alpha-D-muramoyl-L-alanine + ADP + phosphate + H(+). It functions in the pathway cell wall biogenesis; peptidoglycan biosynthesis. Functionally, cell wall formation. The protein is UDP-N-acetylmuramate--L-alanine ligase of Francisella tularensis subsp. tularensis (strain WY96-3418).